Consider the following 143-residue polypeptide: MSHDTDDKTYPYQKDDAELRRRLTPMQYEVTQHAATERAFTGEYTDTEDAGIYKCVVCSTPLFESGAKFHSGCGWPSYFKPLNGEVIDEKIDRTHGMVRVEVRCNHCGAHLGHVFEDGPRDKTGLRYCINSAALNFESRPENE.

Residues 16–139 (DAELRRRLTP…NSAALNFESR (124 aa)) form the MsrB domain. Positions 55, 58, 104, and 107 each coordinate Zn(2+). Cysteine 128 functions as the Nucleophile in the catalytic mechanism.

The protein belongs to the MsrB Met sulfoxide reductase family. Requires Zn(2+) as cofactor.

It carries out the reaction L-methionyl-[protein] + [thioredoxin]-disulfide + H2O = L-methionyl-(R)-S-oxide-[protein] + [thioredoxin]-dithiol. This Burkholderia ambifaria (strain ATCC BAA-244 / DSM 16087 / CCUG 44356 / LMG 19182 / AMMD) (Burkholderia cepacia (strain AMMD)) protein is Peptide methionine sulfoxide reductase MsrB.